Consider the following 227-residue polypeptide: Protein GrpE (227 aa).

Over residues 1–18 (MTQGNQKTEGNPPEQVTV) the composition is skewed to polar residues. 2 disordered regions span residues 1–57 (MTQG…GAAT) and 193–227 (TEEG…ASGD). Over residues 19–35 (TDKRRIDPETGEVRHVP) the composition is skewed to basic and acidic residues. Composition is skewed to low complexity over residues 41–50 (GGTAPQAATA) and 199–213 (EAAA…AAET).

This sequence belongs to the GrpE family. Homodimer.

Its subcellular location is the cytoplasm. Participates actively in the response to hyperosmotic and heat shock by preventing the aggregation of stress-denatured proteins, in association with DnaK and GrpE. It is the nucleotide exchange factor for DnaK and may function as a thermosensor. Unfolded proteins bind initially to DnaJ; upon interaction with the DnaJ-bound protein, DnaK hydrolyzes its bound ATP, resulting in the formation of a stable complex. GrpE releases ADP from DnaK; ATP binding to DnaK triggers the release of the substrate protein, thus completing the reaction cycle. Several rounds of ATP-dependent interactions between DnaJ, DnaK and GrpE are required for fully efficient folding. The protein is Protein GrpE of Mycolicibacterium paratuberculosis (strain ATCC BAA-968 / K-10) (Mycobacterium paratuberculosis).